A 364-amino-acid polypeptide reads, in one-letter code: Spermidine/putrescine import ATP-binding protein PotA (364 aa).

In terms of domain architecture, ABC transporter spans 5–235 (LSFKSVSKQY…PVNRFVADFI (231 aa)). 37–44 (GPSGCGKT) lines the ATP pocket.

It belongs to the ABC transporter superfamily. Spermidine/putrescine importer (TC 3.A.1.11.1) family. The complex is composed of two ATP-binding proteins (PotA), two transmembrane proteins (PotB and PotC) and a solute-binding protein (PotD).

The protein localises to the cell membrane. The catalysed reaction is ATP + H2O + polyamine-[polyamine-binding protein]Side 1 = ADP + phosphate + polyamineSide 2 + [polyamine-binding protein]Side 1.. In terms of biological role, part of the ABC transporter complex PotABCD involved in spermidine/putrescine import. Responsible for energy coupling to the transport system. This Staphylococcus saprophyticus subsp. saprophyticus (strain ATCC 15305 / DSM 20229 / NCIMB 8711 / NCTC 7292 / S-41) protein is Spermidine/putrescine import ATP-binding protein PotA.